The sequence spans 381 residues: S-adenosylmethionine synthase (381 aa).

Histidine 15 is a binding site for ATP. Residue aspartate 17 coordinates Mg(2+). K(+) is bound at residue glutamate 43. Positions 56 and 99 each coordinate L-methionine. Residues 99-109 (QSPDINQGVDR) form a flexible loop region. Residues 164-166 (DAK), 230-231 (RF), aspartate 239, 245-246 (RK), alanine 262, and lysine 266 each bind ATP. Aspartate 239 contacts L-methionine. Lysine 270 is an L-methionine binding site.

Belongs to the AdoMet synthase family. Homotetramer; dimer of dimers. Mg(2+) serves as cofactor. The cofactor is K(+).

It is found in the cytoplasm. It carries out the reaction L-methionine + ATP + H2O = S-adenosyl-L-methionine + phosphate + diphosphate. It functions in the pathway amino-acid biosynthesis; S-adenosyl-L-methionine biosynthesis; S-adenosyl-L-methionine from L-methionine: step 1/1. In terms of biological role, catalyzes the formation of S-adenosylmethionine (AdoMet) from methionine and ATP. The overall synthetic reaction is composed of two sequential steps, AdoMet formation and the subsequent tripolyphosphate hydrolysis which occurs prior to release of AdoMet from the enzyme. The chain is S-adenosylmethionine synthase from Alteromonas mediterranea (strain DSM 17117 / CIP 110805 / LMG 28347 / Deep ecotype).